The primary structure comprises 201 residues: Large ribosomal subunit protein eL15B (201 aa).

The disordered stretch occupies residues 161–182 (SRGLTSIGKKSRGIGKGHRYNN). Residues 169–179 (KKSRGIGKGHR) are compositionally biased toward basic residues. Serine 183 bears the Phosphoserine mark.

The protein belongs to the eukaryotic ribosomal protein eL15 family. As to quaternary structure, component of the large ribosomal subunit (LSU). Mature yeast ribosomes consist of a small (40S) and a large (60S) subunit. The 40S small subunit contains 1 molecule of ribosomal RNA (18S rRNA) and at least 33 different proteins. The large 60S subunit contains 3 rRNA molecules (25S, 5.8S and 5S rRNA) and at least 46 different proteins.

The protein localises to the cytoplasm. It is found in the nucleus. It localises to the nucleolus. In terms of biological role, component of the ribosome, a large ribonucleoprotein complex responsible for the synthesis of proteins in the cell. The small ribosomal subunit (SSU) binds messenger RNAs (mRNAs) and translates the encoded message by selecting cognate aminoacyl-transfer RNA (tRNA) molecules. The large subunit (LSU) contains the ribosomal catalytic site termed the peptidyl transferase center (PTC), which catalyzes the formation of peptide bonds, thereby polymerizing the amino acids delivered by tRNAs into a polypeptide chain. The nascent polypeptides leave the ribosome through a tunnel in the LSU and interact with protein factors that function in enzymatic processing, targeting, and the membrane insertion of nascent chains at the exit of the ribosomal tunnel. The chain is Large ribosomal subunit protein eL15B (rpl1502) from Schizosaccharomyces pombe (strain 972 / ATCC 24843) (Fission yeast).